Reading from the N-terminus, the 603-residue chain is UvrABC system protein C (603 aa).

The GIY-YIG domain occupies 15–92; it reads DQPGCYLMKD…IKKHDPRFNI (78 aa). The 36-residue stretch at 197-232 folds into the UVR domain; it reads KTVKNDLMKKMQEAAENMEFEKAGEFRDQINAIETT.

It belongs to the UvrC family. As to quaternary structure, interacts with UvrB in an incision complex.

It localises to the cytoplasm. In terms of biological role, the UvrABC repair system catalyzes the recognition and processing of DNA lesions. UvrC both incises the 5' and 3' sides of the lesion. The N-terminal half is responsible for the 3' incision and the C-terminal half is responsible for the 5' incision. This is UvrABC system protein C from Listeria monocytogenes serotype 4b (strain CLIP80459).